The primary structure comprises 228 residues: 5'-methylthioadenosine/S-adenosylhomocysteine nucleosidase (228 aa).

Glutamate 11 functions as the Proton acceptor in the catalytic mechanism. Substrate is bound by residues glycine 77, isoleucine 151, and methionine 172–glutamate 173. Aspartate 196 acts as the Proton donor in catalysis.

It belongs to the PNP/UDP phosphorylase family. MtnN subfamily.

The enzyme catalyses S-adenosyl-L-homocysteine + H2O = S-(5-deoxy-D-ribos-5-yl)-L-homocysteine + adenine. The catalysed reaction is S-methyl-5'-thioadenosine + H2O = 5-(methylsulfanyl)-D-ribose + adenine. It carries out the reaction 5'-deoxyadenosine + H2O = 5-deoxy-D-ribose + adenine. It functions in the pathway amino-acid biosynthesis; L-methionine biosynthesis via salvage pathway; S-methyl-5-thio-alpha-D-ribose 1-phosphate from S-methyl-5'-thioadenosine (hydrolase route): step 1/2. Catalyzes the irreversible cleavage of the glycosidic bond in both 5'-methylthioadenosine (MTA) and S-adenosylhomocysteine (SAH/AdoHcy) to adenine and the corresponding thioribose, 5'-methylthioribose and S-ribosylhomocysteine, respectively. Also cleaves 5'-deoxyadenosine, a toxic by-product of radical S-adenosylmethionine (SAM) enzymes, into 5-deoxyribose and adenine. This is 5'-methylthioadenosine/S-adenosylhomocysteine nucleosidase from Staphylococcus aureus (strain MRSA252).